Reading from the N-terminus, the 283-residue chain is Pantothenate synthetase (283 aa).

Position 30–37 (30–37) interacts with ATP; that stretch reads MGNLHDGH. Histidine 37 acts as the Proton donor in catalysis. Residue glutamine 61 participates in (R)-pantoate binding. Glutamine 61 contributes to the beta-alanine binding site. Position 149–152 (149–152) interacts with ATP; that stretch reads GEKD. Glutamine 155 lines the (R)-pantoate pocket. 186–189 contributes to the ATP binding site; the sequence is LSSR.

This sequence belongs to the pantothenate synthetase family. As to quaternary structure, homodimer.

It is found in the cytoplasm. It catalyses the reaction (R)-pantoate + beta-alanine + ATP = (R)-pantothenate + AMP + diphosphate + H(+). The protein operates within cofactor biosynthesis; (R)-pantothenate biosynthesis; (R)-pantothenate from (R)-pantoate and beta-alanine: step 1/1. In terms of biological role, catalyzes the condensation of pantoate with beta-alanine in an ATP-dependent reaction via a pantoyl-adenylate intermediate. This Escherichia coli O17:K52:H18 (strain UMN026 / ExPEC) protein is Pantothenate synthetase.